The chain runs to 156 residues: MGRSISVSFGLLVVFLSLSGTGADQDCLPGWSFYEGHCYKVFNVKKTWEDAEKFCQKQSNGKHLATIEWLGKANFVAELVTLMKLETHVWIGLRVEDKRQQCSSHWTDGSAVSYENVVHNTKCFGLDQKTGYRTWVALRCELAYHFICMSRVPRGA.

Positions 1–23 (MGRSISVSFGLLVVFLSLSGTGA) are cleaved as a signal peptide. Disulfide bonds link Cys-27-Cys-38, Cys-55-Cys-148, and Cys-123-Cys-140. In terms of domain architecture, C-type lectin spans 34–149 (YEGHCYKVFN…CELAYHFICM (116 aa)).

Belongs to the snaclec family. In terms of assembly, heterodimer; disulfide-linked. Expressed by the venom gland.

The protein localises to the secreted. In terms of biological role, interferes with one step of hemostasis (modulation of platelet aggregation, or coagulation cascade, for example). This is Snaclec A12 from Macrovipera lebetinus (Levantine viper).